Here is a 406-residue protein sequence, read N- to C-terminus: Peptidase T (406 aa).

His-77 contributes to the Zn(2+) binding site. The active site involves Asp-79. Asp-139 is a binding site for Zn(2+). Glu-173 acts as the Proton acceptor in catalysis. 3 residues coordinate Zn(2+): Glu-174, Asp-196, and His-377.

It belongs to the peptidase M20B family. Zn(2+) is required as a cofactor.

It localises to the cytoplasm. It carries out the reaction Release of the N-terminal residue from a tripeptide.. Its function is as follows. Cleaves the N-terminal amino acid of tripeptides. This Parabacteroides distasonis (strain ATCC 8503 / DSM 20701 / CIP 104284 / JCM 5825 / NCTC 11152) protein is Peptidase T.